The following is a 336-amino-acid chain: Galactose/methyl galactoside import permease protein MglC (336 aa).

Residues 1 to 16 (MSALNKKSFLTYLKEG) lie on the Periplasmic side of the membrane. A helical transmembrane segment spans residues 17–37 (GIYVVLLVLLAIIIFQDPTFL). At 38–52 (SLLNLSNILTQSSVR) the chain is on the cytoplasmic side. The helical transmembrane segment at 53-73 (IIIALGVAGLIVTQGTDLSAG) threads the bilayer. At 74–106 (RQVGLAAVVAATLLQSMDNANKVFPEMATMPIA) the chain is on the periplasmic side. 2 helical membrane-spanning segments follow: residues 107–127 (LVIL…GLII) and 128–148 (AYLN…VYGI). The Periplasmic portion of the chain corresponds to 149–180 (NSLYYDFVGASPISGFDSGFSTFAQGFVALGS). The helical transmembrane segment at 181-201 (FRLSYITFYALIAVAFVWVLW) threads the bilayer. Residues 202–226 (NKTRFGKNIFAIGGNPEAAKVSGVN) are Cytoplasmic-facing. A helical transmembrane segment spans residues 227-247 (VGLNLLMIYALSGVFYAFGGM). Residues 248 to 256 (LEAGRIGSA) are Periplasmic-facing. The chain crosses the membrane as a helical span at residues 257 to 277 (TNNLGFMYELDAIAACVVGGV). A topological domain (cytoplasmic) is located at residue Ser-278. The chain crosses the membrane as a helical span at residues 279 to 299 (FSGGVGTVIGVVTGVIIFTVI). The Periplasmic segment spans residues 300-305 (NYGLTY). Residues 306–326 (IGVNPYWQYIIKGAIIIFAVA) form a helical membrane-spanning segment. Over 327–336 (LDSLKYARKK) the chain is Cytoplasmic.

Belongs to the binding-protein-dependent transport system permease family. AraH/RbsC subfamily. As to quaternary structure, the complex is composed of one ATP-binding protein (MglA), two transmembrane proteins (MglC) and a solute-binding protein (MglB).

The protein resides in the cell inner membrane. Its function is as follows. Part of the ABC transporter complex MglABC involved in galactose/methyl galactoside import. Probably responsible for the translocation of the substrate across the membrane. The chain is Galactose/methyl galactoside import permease protein MglC (mglC) from Escherichia coli (strain K12).